The following is a 461-amino-acid chain: ATP-dependent protease ATPase subunit HslU (461 aa).

ATP-binding positions include Val-21, Gly-63 to Glu-68, Asp-274, Glu-339, and Arg-411.

Belongs to the ClpX chaperone family. HslU subfamily. As to quaternary structure, a double ring-shaped homohexamer of HslV is capped on each side by a ring-shaped HslU homohexamer. The assembly of the HslU/HslV complex is dependent on binding of ATP.

It localises to the cytoplasm. Its function is as follows. ATPase subunit of a proteasome-like degradation complex; this subunit has chaperone activity. The binding of ATP and its subsequent hydrolysis by HslU are essential for unfolding of protein substrates subsequently hydrolyzed by HslV. HslU recognizes the N-terminal part of its protein substrates and unfolds these before they are guided to HslV for hydrolysis. The polypeptide is ATP-dependent protease ATPase subunit HslU (Caldanaerobacter subterraneus subsp. tengcongensis (strain DSM 15242 / JCM 11007 / NBRC 100824 / MB4) (Thermoanaerobacter tengcongensis)).